Here is a 484-residue protein sequence, read N- to C-terminus: Glutamate mutase epsilon subunit (484 aa).

Residue Arg-66 participates in L-glutamate binding. Gly-68 provides a ligand contact to adenosylcob(III)alamin. Arg-100 serves as a coordination point for L-glutamate. Residue Asn-123 participates in adenosylcob(III)alamin binding. L-glutamate is bound by residues 149 to 150 (RH), Glu-171, and Tyr-177. Pro-180 serves as a coordination point for adenosylcob(III)alamin. Position 181 (Tyr-181) interacts with L-glutamate. Positions 297, 326, 330, and 334 each coordinate adenosylcob(III)alamin.

It belongs to the methylaspartate mutase GlmE subunit family. In terms of assembly, heterotetramer composed of 2 epsilon subunits (GlmE) and 2 sigma subunits (GlmS). GlmE exists as a homodimer and GlmS as a monomer. Adenosylcob(III)alamin serves as cofactor.

The enzyme catalyses (2S,3S)-3-methyl-L-aspartate = L-glutamate. It functions in the pathway amino-acid degradation; L-glutamate degradation via mesaconate pathway; acetate and pyruvate from L-glutamate: step 1/4. In terms of biological role, catalyzes the carbon skeleton rearrangement of L-glutamate to L-threo-3-methylaspartate ((2S,3S)-3-methylaspartate). This chain is Glutamate mutase epsilon subunit, found in Desulfitobacterium hafniense (strain Y51).